Consider the following 604-residue polypeptide: Aspartate--tRNA(Asp/Asn) ligase (604 aa).

Residue E175 coordinates L-aspartate. The interval 199–202 (QQFK) is aspartate. L-aspartate contacts are provided by R221 and H456. Residue 221–223 (RDE) coordinates ATP. E496 lines the ATP pocket. R503 contributes to the L-aspartate binding site. 548-551 (GVDR) serves as a coordination point for ATP.

The protein belongs to the class-II aminoacyl-tRNA synthetase family. Type 1 subfamily. Homodimer.

The protein localises to the cytoplasm. It carries out the reaction tRNA(Asx) + L-aspartate + ATP = L-aspartyl-tRNA(Asx) + AMP + diphosphate. Its function is as follows. Aspartyl-tRNA synthetase with relaxed tRNA specificity since it is able to aspartylate not only its cognate tRNA(Asp) but also tRNA(Asn). Reaction proceeds in two steps: L-aspartate is first activated by ATP to form Asp-AMP and then transferred to the acceptor end of tRNA(Asp/Asn). The sequence is that of Aspartate--tRNA(Asp/Asn) ligase from Methylorubrum extorquens (strain CM4 / NCIMB 13688) (Methylobacterium extorquens).